A 115-amino-acid polypeptide reads, in one-letter code: Large ribosomal subunit protein bL19 (115 aa).

The protein belongs to the bacterial ribosomal protein bL19 family.

This protein is located at the 30S-50S ribosomal subunit interface and may play a role in the structure and function of the aminoacyl-tRNA binding site. This Salmonella choleraesuis (strain SC-B67) protein is Large ribosomal subunit protein bL19.